Consider the following 720-residue polypeptide: Ornithine decarboxylase (720 aa).

At Lys-354 the chain carries N6-(pyridoxal phosphate)lysine.

Belongs to the Orn/Lys/Arg decarboxylase class-I family. It depends on pyridoxal 5'-phosphate as a cofactor.

The catalysed reaction is L-ornithine + H(+) = putrescine + CO2. This Haemophilus influenzae (strain ATCC 51907 / DSM 11121 / KW20 / Rd) protein is Ornithine decarboxylase (speF).